The chain runs to 289 residues: MTTSAASWRSDPADPSVASARERALRQRSEGRVRITASAFGGVTRLTDLAEGGALRARLPRGGPGLEAVIVNTAGGVACGDVFSIEAKAGPGAHLTVATPAAEKVYRSDGLCADIQVRLVAEAGARLDWLPQETILFDRARLRRRYEIDLSATASFLSFEALMLGRLAHGDAMGEGHLEDHWRLRRDGALIFADALRLAGPMGALLARPAVAGGNRALATLLYVAPDAEARLEEARALLDAARCEAGASAWNGLLCVRLLAPDIETLRRDATSFLMAFRNAPLPRVWAT.

The protein belongs to the UreD family. In terms of assembly, ureD, UreF and UreG form a complex that acts as a GTP-hydrolysis-dependent molecular chaperone, activating the urease apoprotein by helping to assemble the nickel containing metallocenter of UreC. The UreE protein probably delivers the nickel.

It is found in the cytoplasm. In terms of biological role, required for maturation of urease via the functional incorporation of the urease nickel metallocenter. The sequence is that of Urease accessory protein UreD from Xanthobacter autotrophicus (strain ATCC BAA-1158 / Py2).